Reading from the N-terminus, the 113-residue chain is Large ribosomal subunit protein bL19m (113 aa).

Belongs to the bacterial ribosomal protein bL19 family.

It is found in the mitochondrion. The sequence is that of Large ribosomal subunit protein bL19m (RPL19) from Reclinomonas americana.